Consider the following 194-residue polypeptide: MEEKLKKSKIIFVVGGPGSGKGTQCEKIVQKYGYTHLSTGDLLRAEVSSGSARGKMLSEIMEKGQLVPLETVLDMLRDAMVAKVDTSKGFLIDGYPREVKQGEEFERKIGQPTLLLYVDAGPETMTKRLLKRGETSGRVDDNEETIKKRLETYYKATEPVIAFYEKRGIVRKVNAEGSVDDVFSQVCTHLDTLK.

Position 1 is an N-acetylmethionine (M1). Residue G18 to T23 participates in ATP binding. A Phosphoserine modification is found at S38. The interval S38–V67 is NMP. AMP is bound by residues T39, R44, Q65–V67, G94–R97, and Q101. Residues K131–D141 are LID. R132 is a binding site for ATP. AMP-binding residues include R138 and R149. G177 provides a ligand contact to ATP.

It belongs to the adenylate kinase family. AK1 subfamily. As to quaternary structure, monomer. It depends on Mg(2+) as a cofactor.

The protein resides in the cytoplasm. It catalyses the reaction a ribonucleoside 5'-phosphate + ATP = a ribonucleoside 5'-diphosphate + ADP. The catalysed reaction is AMP + ATP = 2 ADP. It carries out the reaction dAMP + ATP = dADP + ADP. The enzyme catalyses dATP + AMP = dADP + ADP. It catalyses the reaction dAMP + dATP = 2 dADP. The catalysed reaction is a 2'-deoxyribonucleoside 5'-diphosphate + ATP = a 2'-deoxyribonucleoside 5'-triphosphate + ADP. It carries out the reaction a ribonucleoside 5'-diphosphate + ATP = a ribonucleoside 5'-triphosphate + ADP. The enzyme catalyses CDP + GTP = CTP + GDP. It catalyses the reaction GDP + ATP = GTP + ADP. The catalysed reaction is UDP + ATP = UTP + ADP. It carries out the reaction GTP + UDP = UTP + GDP. The enzyme catalyses dTDP + GTP = dTTP + GDP. It catalyses the reaction dCDP + GTP = dCTP + GDP. The catalysed reaction is dGDP + ATP = dGTP + ADP. It carries out the reaction dADP + GTP = dATP + GDP. The enzyme catalyses thiamine diphosphate + ADP = thiamine triphosphate + AMP. Its function is as follows. Catalyzes the reversible transfer of the terminal phosphate group between ATP and AMP. Also displays broad nucleoside diphosphate kinase activity. Plays an important role in cellular energy homeostasis and in adenine nucleotide metabolism. Also catalyzes at a very low rate the synthesis of thiamine triphosphate (ThTP) from thiamine diphosphate (ThDP) and ADP. This is Adenylate kinase isoenzyme 1 from Sus scrofa (Pig).